Consider the following 95-residue polypeptide: uncharacterized protein (95 aa).

This is an uncharacterized protein from Acheta domesticus (House cricket).